The sequence spans 566 residues: Mitochondrial distribution and morphology protein 34 (566 aa).

An SMP-LTD domain is found at 1–195 (MAFNFNWSPL…LPAIIHRLSL (195 aa)). Disordered stretches follow at residues 212-237 (PEQT…DSLG), 349-401 (GYGL…NPSV), 432-518 (PERR…SSST), and 539-566 (KLMP…AYGQ). Basic residues predominate over residues 358 to 370 (RHSKAHSRKRKKR). Positions 380-401 (TSDTASVSDESAYTETASNPSV) are enriched in polar residues. The span at 444–454 (PRRDIATEMLR) shows a compositional bias: basic and acidic residues.

Belongs to the MDM34 family. Component of the ER-mitochondria encounter structure (ERMES) or MDM complex, composed of mmm1, mdm10, mdm12 and mdm34.

The protein resides in the mitochondrion outer membrane. In terms of biological role, component of the ERMES/MDM complex, which serves as a molecular tether to connect the endoplasmic reticulum (ER) and mitochondria. Components of this complex are involved in the control of mitochondrial shape and protein biogenesis, and function in nonvesicular lipid trafficking between the ER and mitochondria. Mdm34 is required for the interaction of the ER-resident membrane protein mmm1 and the outer mitochondrial membrane-resident beta-barrel protein mdm10. This chain is Mitochondrial distribution and morphology protein 34, found in Aspergillus flavus (strain ATCC 200026 / FGSC A1120 / IAM 13836 / NRRL 3357 / JCM 12722 / SRRC 167).